A 134-amino-acid chain; its full sequence is Translation initiation factor 2 subunit beta (134 aa).

The segment covering 1 to 12 (MGYEEQLDRALE) has biased composition (basic and acidic residues). The tract at residues 1–32 (MGYEEQLDRALEETPDIEGTAARFSVPDPDVR) is disordered.

Belongs to the eIF-2-beta/eIF-5 family. Heterotrimer composed of an alpha, a beta and a gamma chain.

Its function is as follows. eIF-2 functions in the early steps of protein synthesis by forming a ternary complex with GTP and initiator tRNA. This Natronomonas pharaonis (strain ATCC 35678 / DSM 2160 / CIP 103997 / JCM 8858 / NBRC 14720 / NCIMB 2260 / Gabara) (Halobacterium pharaonis) protein is Translation initiation factor 2 subunit beta.